A 314-amino-acid chain; its full sequence is Olfactory receptor 10A3 (314 aa).

The Extracellular portion of the chain corresponds to 1 to 25 (MKRQNQSCVVEFILLGFSNFPELQV). N-linked (GlcNAc...) asparagine glycosylation is present at Asn5. A helical transmembrane segment spans residues 26–46 (QLFGVFLVIYVVTLMGNAIIT). Residues 47-54 (VIISLNQS) are Cytoplasmic-facing. Residues 55-75 (LHVPMYLFLLNLSVVEVSFSA) form a helical membrane-spanning segment. The Extracellular segment spans residues 76-99 (VITPEMLVVLSTEKTMISFVGCFA). An intrachain disulfide couples Cys97 to Cys189. Residues 100–120 (QMYFILLFGGTECFLLGAMAY) form a helical membrane-spanning segment. The Cytoplasmic segment spans residues 121–139 (DRFAAICHPLNYPVIMNRG). A helical membrane pass occupies residues 140 to 160 (VFMKLVIFSWISGIMVATVQT). Topologically, residues 161-197 (TWVFSFPFCGPNEINHLFCETPPVLELVCADTFLFEI) are extracellular. The chain crosses the membrane as a helical span at residues 198 to 217 (YAFTGTILIVMVPFLLILLS). The Cytoplasmic segment spans residues 218–237 (YIRVLFAILKMPSTTGRQKA). The chain crosses the membrane as a helical span at residues 238 to 258 (FSTCASHLTSVTLFYGTANMT). Residues 259–271 (YLQPKSGYSPETK) are Extracellular-facing. Residues 272–292 (KLISLAYTLLTPLLNPLIYSL) form a helical membrane-spanning segment. Residues 293–314 (RNSEMKRTLIKLWRRKVILHTF) lie on the Cytoplasmic side of the membrane.

It belongs to the G-protein coupled receptor 1 family.

The protein localises to the cell membrane. Odorant receptor. The polypeptide is Olfactory receptor 10A3 (OR10A3) (Homo sapiens (Human)).